A 116-amino-acid chain; its full sequence is Large ribosomal subunit protein bL17 (116 aa).

The protein belongs to the bacterial ribosomal protein bL17 family. In terms of assembly, part of the 50S ribosomal subunit. Contacts protein L32.

The chain is Large ribosomal subunit protein bL17 from Sulfurimonas denitrificans (strain ATCC 33889 / DSM 1251) (Thiomicrospira denitrificans (strain ATCC 33889 / DSM 1251)).